The following is a 485-amino-acid chain: Glutamate--tRNA ligase (485 aa).

The short motif at 11-21 (PSPTGHLHIGN) is the 'HIGH' region element. The 'KMSKS' region signature appears at 252 to 256 (KLSKR). An ATP-binding site is contributed by lysine 255.

The protein belongs to the class-I aminoacyl-tRNA synthetase family. Glutamate--tRNA ligase type 1 subfamily. Monomer.

It is found in the cytoplasm. It catalyses the reaction tRNA(Glu) + L-glutamate + ATP = L-glutamyl-tRNA(Glu) + AMP + diphosphate. Functionally, catalyzes the attachment of glutamate to tRNA(Glu) in a two-step reaction: glutamate is first activated by ATP to form Glu-AMP and then transferred to the acceptor end of tRNA(Glu). This chain is Glutamate--tRNA ligase, found in Bacillus licheniformis (strain ATCC 14580 / DSM 13 / JCM 2505 / CCUG 7422 / NBRC 12200 / NCIMB 9375 / NCTC 10341 / NRRL NRS-1264 / Gibson 46).